The following is an 84-amino-acid chain: Sec-independent protein translocase protein TatA (84 aa).

A helical membrane pass occupies residues 1-21 (MGGISIWQLLIIAVIVILLFG). Residues 40 to 84 (KKAMSDEDKPADKKDADFEPKNIEQQKTEASAETTAETKKDKEQA) form a disordered region. Composition is skewed to basic and acidic residues over residues 42 to 66 (AMSD…EQQK) and 75 to 84 (AETKKDKEQA).

This sequence belongs to the TatA/E family. The Tat system comprises two distinct complexes: a TatABC complex, containing multiple copies of TatA, TatB and TatC subunits, and a separate TatA complex, containing only TatA subunits. Substrates initially bind to the TatABC complex, which probably triggers association of the separate TatA complex to form the active translocon.

Its subcellular location is the cell inner membrane. Part of the twin-arginine translocation (Tat) system that transports large folded proteins containing a characteristic twin-arginine motif in their signal peptide across membranes. TatA could form the protein-conducting channel of the Tat system. The protein is Sec-independent protein translocase protein TatA of Vibrio atlanticus (strain LGP32) (Vibrio splendidus (strain Mel32)).